The sequence spans 312 residues: Ribosomal protein L11 methyltransferase (312 aa).

The S-adenosyl-L-methionine site is built by Thr160, Gly181, Asp203, and Asn248.

This sequence belongs to the methyltransferase superfamily. PrmA family.

Its subcellular location is the cytoplasm. It carries out the reaction L-lysyl-[protein] + 3 S-adenosyl-L-methionine = N(6),N(6),N(6)-trimethyl-L-lysyl-[protein] + 3 S-adenosyl-L-homocysteine + 3 H(+). Functionally, methylates ribosomal protein L11. In Fusobacterium nucleatum subsp. nucleatum (strain ATCC 25586 / DSM 15643 / BCRC 10681 / CIP 101130 / JCM 8532 / KCTC 2640 / LMG 13131 / VPI 4355), this protein is Ribosomal protein L11 methyltransferase.